A 545-amino-acid chain; its full sequence is Membrane protein insertase YidC (545 aa).

4 helical membrane passes run 350-370 (IIGN…AVLY), 424-444 (LPML…FASV), 461-481 (ADPY…QTYL), and 498-518 (PLVF…YWVV).

The protein belongs to the OXA1/ALB3/YidC family. Type 1 subfamily. As to quaternary structure, interacts with the Sec translocase complex via SecD. Specifically interacts with transmembrane segments of nascent integral membrane proteins during membrane integration.

It localises to the cell inner membrane. Its function is as follows. Required for the insertion and/or proper folding and/or complex formation of integral membrane proteins into the membrane. Involved in integration of membrane proteins that insert both dependently and independently of the Sec translocase complex, as well as at least some lipoproteins. Aids folding of multispanning membrane proteins. The protein is Membrane protein insertase YidC of Neisseria meningitidis serogroup C (strain 053442).